Here is a 458-residue protein sequence, read N- to C-terminus: MGKEKTHVNVVVIGHVDSGKSTTTGHLIYKCGGIDKRTIEKFEKEAAELGKGSFKYAWVLDKLKAERERGITIDIALWKFETPKYHVTVIDAPGHRDFIKNMITGTSQADCGILIIAAGTGEFEAGISKDGQTREHALLAFTLGVRQLIVAINKMDSTKWSEQRFNEIIKEVSGFIKKIGFNPKSVPFVPISGWHGDNMLEESTNMPWYKGWNKETKAGAKSGKTLLDAIDAIDPPQRPSDKPLRLPLQDVYKIGGIGTVPVGRVETGVIKAGMVVTFAPANVTTEVKSVEMHHEQLVEGLPGDNVGFNVKNVSVKDIRRGNVCSDSKNDPAKEAGSFTAQVIVLNHPGQIGAGYAPVLDCHTAHIACKFAELLEKIDRRSGKKLEDAPKFVKSGDSAIVKMIPSKPMCVEAYTDYPPLGRFAVRDMRQTVAVGVIKAVEKVDKAGKVTKAAAKAGEK.

The residue at position 2 (glycine 2) is a N,N,N-trimethylglycine. Lysine 3 is subject to N6,N6-dimethyllysine; alternate. Lysine 3 carries the post-translational modification N6-methyllysine; alternate. Positions 5-240 (KTHVNVVVIG…DAIDPPQRPS (236 aa)) constitute a tr-type G domain. The interval 14–21 (GHVDSGKS) is G1. 14–21 (GHVDSGKS) is a binding site for GTP. Residue lysine 30 is modified to N6-methyllysine. Residues 70–74 (GITID) are G2. An N6,N6,N6-trimethyllysine modification is found at lysine 79. The tract at residues 91–94 (DAPG) is G3. GTP-binding positions include 91–95 (DAPGH) and 153–156 (NKMD). The interval 153–156 (NKMD) is G4. The interval 192 to 194 (SGW) is G5. Position 316 is an N6,N6-dimethyllysine; alternate (lysine 316). At lysine 316 the chain carries N6-methyllysine; alternate. At lysine 390 the chain carries N6-methyllysine.

The protein belongs to the TRAFAC class translation factor GTPase superfamily. Classic translation factor GTPase family. EF-Tu/EF-1A subfamily.

Its subcellular location is the cytoplasm. In terms of biological role, this protein promotes the GTP-dependent binding of aminoacyl-tRNA to the A-site of ribosomes during protein biosynthesis. The protein is Elongation factor 1-alpha (TEF-1) of Absidia glauca (Pin mould).